We begin with the raw amino-acid sequence, 345 residues long: uncharacterized protein (345 aa).

Polar residues predominate over residues 1-13; it reads MSKPNTETISVNI. The disordered stretch occupies residues 1–23; sequence MSKPNTETISVNIPESEGVPLPD. Positions 283-316 form a coiled coil; the sequence is SLKQRTNILKKQGETLKKNVEDINKDTSNLKRHA.

It localises to the virion. This is an uncharacterized protein from Acanthamoeba polyphaga mimivirus (APMV).